A 247-amino-acid chain; its full sequence is tRNA uridine(34) hydroxylase (247 aa).

A Rhodanese domain is found at 123 to 217 (ITKQDVIVDT…YLEDTQNKNN (95 aa)). The active-site Cysteine persulfide intermediate is Cys177.

It belongs to the TrhO family.

The catalysed reaction is uridine(34) in tRNA + AH2 + O2 = 5-hydroxyuridine(34) in tRNA + A + H2O. In terms of biological role, catalyzes oxygen-dependent 5-hydroxyuridine (ho5U) modification at position 34 in tRNAs. This chain is tRNA uridine(34) hydroxylase, found in Rickettsia bellii (strain RML369-C).